Reading from the N-terminus, the 800-residue chain is Protein MICRORCHIDIA 4 (800 aa).

2 disordered regions span residues 1 to 76 (MEPI…ARSD) and 552 to 702 (AKRQ…RTLS). Over residues 9-18 (NPVTTSTLST) the composition is skewed to polar residues. Over residues 36-47 (ELSSSNEGSELG) the composition is skewed to low complexity. Basic and acidic residues-rich tracts occupy residues 559–578 (SAKD…EFDP) and 628–641 (VSKD…EKGG). The segment covering 666–675 (NSDDDYDCDS) has biased composition (acidic residues). Positions 699–766 (RTLSQLEQEN…QASLIDVFAE (68 aa)) form a coiled coil. 2 short sequence motifs (nuclear localization signal) span residues 716 to 723 (DKKEEVFL) and 735 to 742 (LRKTLEAE).

Belongs to the MORC ATPase protein family. Homodimer and heterodimer. Component of an RNA-directed DNA methylation (RdDM) complex. Forms homomeric complexes. The cofactor is Mg(2+). It depends on Mn(2+) as a cofactor.

It localises to the nucleus. Exhibits ATPase activity. Binds DNA/RNA in a non-specific manner and exhibits endonuclease activity. Probably involved in DNA repair. Involved in RNA-directed DNA methylation (RdDM) as a component of the RdDM machinery and required for gene silencing. May also be involved in the regulation of chromatin architecture to maintain gene silencing. Together with MORC7, acts to suppress a wide set of non-methylated protein-coding genes, especially involved in pathogen response. Positive regulator of defense against the oomycete Hyaloperonospora arabidopsidis (Hpa). In Arabidopsis thaliana (Mouse-ear cress), this protein is Protein MICRORCHIDIA 4.